Consider the following 282-residue polypeptide: MSKEVISEEGQVHQHGKDYVDPPPAPFFDMGELKLWSFWRAAIAEFIATLLFLYITVATVIGYKKETDPCASVGLLGIAWSFGGMIFVLVYCTAGISGGHINPAVTFGLFLARKVSLLRALVYMIAQCAGAICGVGLVKAFMKGPYNQFGGGANSVALGYNKGTAFGAELIGTFVLVYTVFSATDPKRSARDSHVPILAPLPIGFAVFMVHLATIPITGTGINPARSFGAAVIYNKKRVWDDHWIFWVGPFVGALAAAAYHQYVLRAAAIKALGSFRSNPTN.

2 consecutive transmembrane segments (helical) span residues 39-61 (WRAA…ATVI) and 74-96 (GLLG…TAGI). Positions 102–104 (NPA) match the NPA 1 motif. Transmembrane regions (helical) follow at residues 116-138 (SLLR…VGLV), 159-181 (GYNK…YTVF), 201-223 (LPIG…TGIN), and 243-265 (HWIF…QYVL). The NPA 2 motif lies at 223 to 225 (NPA).

The protein belongs to the MIP/aquaporin (TC 1.A.8) family. PIP (TC 1.A.8.11) subfamily.

It is found in the membrane. Its function is as follows. Water-specific channel. This chain is Aquaporin PIP-type, found in Atriplex canescens (Fourwing saltbush).